The sequence spans 360 residues: Peptide chain release factor 1 (360 aa).

Gln-237 bears the N5-methylglutamine mark.

It belongs to the prokaryotic/mitochondrial release factor family. In terms of processing, methylated by PrmC. Methylation increases the termination efficiency of RF1.

The protein localises to the cytoplasm. Peptide chain release factor 1 directs the termination of translation in response to the peptide chain termination codons UAG and UAA. This is Peptide chain release factor 1 from Pseudomonas fluorescens (strain SBW25).